Here is a 138-residue protein sequence, read N- to C-terminus: ATP synthase epsilon chain (138 aa).

Belongs to the ATPase epsilon chain family. As to quaternary structure, F-type ATPases have 2 components, CF(1) - the catalytic core - and CF(0) - the membrane proton channel. CF(1) has five subunits: alpha(3), beta(3), gamma(1), delta(1), epsilon(1). CF(0) has three main subunits: a, b and c.

The protein resides in the cell inner membrane. Produces ATP from ADP in the presence of a proton gradient across the membrane. The protein is ATP synthase epsilon chain of Polaromonas sp. (strain JS666 / ATCC BAA-500).